Consider the following 198-residue polypeptide: Protein GrpE (198 aa).

The segment covering 1 to 21 (MMKKAEDPLQDREGTIQEHTE) has biased composition (basic and acidic residues). The interval 1 to 56 (MMKKAEDPLQDREGTIQEHTEGQAGTAAADQSAAVETPESRIAGLEREVQAEKEQN) is disordered. Residues 22 to 34 (GQAGTAAADQSAA) are compositionally biased toward low complexity. Residues 44–56 (GLEREVQAEKEQN) are compositionally biased toward basic and acidic residues.

This sequence belongs to the GrpE family. In terms of assembly, homodimer.

It is found in the cytoplasm. In terms of biological role, participates actively in the response to hyperosmotic and heat shock by preventing the aggregation of stress-denatured proteins, in association with DnaK and GrpE. It is the nucleotide exchange factor for DnaK and may function as a thermosensor. Unfolded proteins bind initially to DnaJ; upon interaction with the DnaJ-bound protein, DnaK hydrolyzes its bound ATP, resulting in the formation of a stable complex. GrpE releases ADP from DnaK; ATP binding to DnaK triggers the release of the substrate protein, thus completing the reaction cycle. Several rounds of ATP-dependent interactions between DnaJ, DnaK and GrpE are required for fully efficient folding. The sequence is that of Protein GrpE from Chlorobium luteolum (strain DSM 273 / BCRC 81028 / 2530) (Pelodictyon luteolum).